We begin with the raw amino-acid sequence, 1066 residues long: E3 ubiquitin-protein ligase RNF31 (1066 aa).

The segment at 1 to 479 (MPGDEERGFL…PEKQRQDKMR (479 aa)) is polyubiquitin-binding. A PUB domain is found at 70–141 (TLSTALNILE…SFPEGQEEPD (72 aa)). A disordered region spans residues 251 to 287 (LRQALPGSHQTASLSSSLPASSQPRPPSSSLALGDSS). Positions 262–287 (ASLSSSLPASSQPRPPSSSLALGDSS) are enriched in low complexity. 2 consecutive RanBP2-type zinc fingers follow at residues 293 to 325 (PANA…PKGC) and 344 to 373 (ARDQ…PRLA). Ser-377 carries the phosphoserine modification. The RanBP2-type 3 zinc-finger motif lies at 403–432 (QPQVWYCDHCTFCNSGPVWVCAMCNRTRDP). The interval 434-478 (PTQPALQSYPSSLEKGRPKPGSSQHLGSSLPASCGDPEKQRQDKM) is disordered. Residues 454 to 464 (GSSQHLGSSLP) show a composition bias toward polar residues. Residues 469 to 478 (DPEKQRQDKM) show a composition bias toward basic and acidic residues. Residues 557-610 (GNLDEAVEECVRARRRKVHELQSLGFGPKEGSLQALFQHGGDVARALTELQRQR) form an interaction with RBCK1 region. The UBA domain maps to 558-609 (NLDEAVEECVRARRRKVHELQSLGFGPKEGSLQALFQHGGDVARALTELQRQ). Residues 689 to 923 (LAQECAVCGW…KSLHGHHPRD (235 aa)) form a TRIAD supradomain region. Zn(2+) contacts are provided by Cys-693, Cys-696, Cys-711, Cys-713, Cys-716, Cys-719, Cys-738, Cys-741, Cys-793, Cys-796, Cys-811, Cys-814, Cys-819, Cys-822, His-830, Cys-835, Cys-865, and Cys-868. Residues 693–743 (CAVCGWALPRNRMQALISCECTICPECFRQHFTIALKEKHITDMVCPACGR) form an RING-type 1 zinc finger. The IBR-type zinc finger occupies 773-835 (ALFHKKLTEA…WEEQHRGRSC (63 aa)). The RING-type 2; atypical zinc-finger motif lies at 865–895 (CPKCKFSYALARGGCMHFHCTQCRHQFCSGC). Cys-879 is a catalytic residue. Positions 884, 887, 892, 895, 910, and 919 each coordinate Zn(2+). The tract at residues 904–1066 (KCPDPNCKVK…LGQSIARRRK (163 aa)) is LDD domain.

This sequence belongs to the RBR family. In terms of assembly, component of the LUBAC complex (linear ubiquitin chain assembly complex) which consists of SHARPIN, RBCK1 and RNF31. LUBAC has a MW of approximately 600 kDa suggesting a heteromultimeric assembly of its subunits. Associates with the TNF-R1 signaling complex (TNF-RSC) in a stimulation-dependent manner. Interacts (via the PUB domain) with OTULIN (via the PIM motif); the interaction is direct. Interacts (via the PUB domain) with VCP (via the PIM motif). Interacts (via the PUB domain) with SPATA2 (via the PIM motif); interaction is direct and bridges RNF31 and CYLD. Interacts with CYLD; the interaction is indirect and is mediated via SPATA2. Interacts with MUSK. Interacts with CARD11, promoting linear ubiquitination of BCL10. Autoubiquitinated. Interaction with OTULIN is required to suppress formation of 'Met-1'-linked polyubiquitin chains and prevent subsequent inactivation of the LUBAC complex. Post-translationally, cleaved by caspase during apoptosis. As to expression, widely expressed (at protein level). Not expressed in heart.

The protein localises to the cytoplasm. It catalyses the reaction [E2 ubiquitin-conjugating enzyme]-S-ubiquitinyl-L-cysteine + [acceptor protein]-L-lysine = [E2 ubiquitin-conjugating enzyme]-L-cysteine + [acceptor protein]-N(6)-ubiquitinyl-L-lysine.. It participates in protein modification; protein ubiquitination. Functionally, E3 ubiquitin-protein ligase component of the LUBAC complex which conjugates linear ('Met-1'-linked) polyubiquitin chains to substrates and plays a key role in NF-kappa-B activation and regulation of inflammation. LUBAC conjugates linear polyubiquitin to IKBKG and RIPK1 and is involved in activation of the canonical NF-kappa-B and the JNK signaling pathways. Linear ubiquitination mediated by the LUBAC complex interferes with TNF-induced cell death and thereby prevents inflammation. LUBAC is recruited to the TNF-R1 signaling complex (TNF-RSC) following polyubiquitination of TNF-RSC components by BIRC2 and/or BIRC3 and to conjugate linear polyubiquitin to IKBKG and possibly other components contributing to the stability of the complex. The LUBAC complex is also involved in innate immunity by conjugating linear polyubiquitin chains at the surface of bacteria invading the cytosol to form the ubiquitin coat surrounding bacteria. LUBAC is not able to initiate formation of the bacterial ubiquitin coat, and can only promote formation of linear polyubiquitins on pre-existing ubiquitin. Recruited to the surface of bacteria by RNF213, which initiates the bacterial ubiquitin coat. The bacterial ubiquitin coat acts as an 'eat-me' signal for xenophagy and promotes NF-kappa-B activation. Together with OTULIN, the LUBAC complex regulates the canonical Wnt signaling during angiogenesis. RNF31 is required for linear ubiquitination of BCL10, thereby promoting TCR-induced NF-kappa-B activation. Binds polyubiquitin of different linkage types. This chain is E3 ubiquitin-protein ligase RNF31, found in Mus musculus (Mouse).